The following is a 247-amino-acid chain: Probable proteasome subunit alpha type-5 (247 aa).

Thr-55 bears the Phosphothreonine mark.

It belongs to the peptidase T1A family. The 26S proteasome consists of a 20S proteasome core and two 19S regulatory subunits. The 20S proteasome core is composed of 28 subunits that are arranged in four stacked rings, resulting in a barrel-shaped structure. The two end rings are each formed by seven alpha subunits, and the two central rings are each formed by seven beta subunits. The catalytic chamber with the active sites is on the inside of the barrel.

Its subcellular location is the cytoplasm. It localises to the nucleus. Functionally, the proteasome is a multicatalytic proteinase complex which is characterized by its ability to cleave peptides with Arg, Phe, Tyr, Leu, and Glu adjacent to the leaving group at neutral or slightly basic pH. The proteasome has an ATP-dependent proteolytic activity. In Schizosaccharomyces pombe (strain 972 / ATCC 24843) (Fission yeast), this protein is Probable proteasome subunit alpha type-5 (pup2).